We begin with the raw amino-acid sequence, 141 residues long: VLSAADKAHVKAFWTKIGGHAGEYGGEALERTFLSFPTTKTYFPHFDLSPGSAQVKAHGKKVGDALTLAVGHLDDLPGALSDLSDLHAHKLRVDPVNFKLLGHCVLVTLALHHPDAFTPAVHASLDKFITTVSTVLTSKYR.

Positions 1–141 (VLSAADKAHV…VSTVLTSKYR (141 aa)) constitute a Globin domain. Ser3 carries the phosphoserine modification. Residues Lys7 and Lys11 each carry the N6-succinyllysine modification. Lys16 is modified (N6-acetyllysine; alternate). Lys16 is subject to N6-succinyllysine; alternate. Tyr24 carries the phosphotyrosine modification. At Ser35 the chain carries Phosphoserine. N6-succinyllysine is present on Lys40. Position 49 is a phosphoserine (Ser49). His58 provides a ligand contact to O2. His87 lines the heme b pocket. Thr108 carries the post-translational modification Phosphothreonine. Ser124 bears the Phosphoserine mark. Thr134 and Thr137 each carry phosphothreonine. Ser138 carries the post-translational modification Phosphoserine.

Belongs to the globin family. As to quaternary structure, heterotetramer of two alpha chains and two beta chains. Red blood cells.

Functionally, involved in oxygen transport from the lung to the various peripheral tissues. In terms of biological role, hemopressin acts as an antagonist peptide of the cannabinoid receptor CNR1. Hemopressin-binding efficiently blocks cannabinoid receptor CNR1 and subsequent signaling. The sequence is that of Hemoglobin subunit alpha (HBA) from Bradypus tridactylus (Pale-throated three-toed sloth).